The sequence spans 90 residues: Putative beta-neurotoxin RjAa2f (90 aa).

The N-terminal stretch at 1–18 (MKILIFIIASFMLIGVEC) is a signal peptide. The LCN-type CS-alpha/beta domain maps to 19-89 (KEGYPMGSDG…VWDSKTNKCG (71 aa)). Disulfide bonds link Cys-29-Cys-88, Cys-33-Cys-62, Cys-40-Cys-69, and Cys-44-Cys-71.

It belongs to the long (4 C-C) scorpion toxin superfamily. Sodium channel inhibitor family. Beta subfamily. Expressed by the venom gland.

It is found in the secreted. Beta toxins bind voltage-independently at site-4 of sodium channels (Nav) and shift the voltage of activation toward more negative potentials thereby affecting sodium channel activation and promoting spontaneous and repetitive firing. In Rhopalurus junceus (Caribbean blue scorpion), this protein is Putative beta-neurotoxin RjAa2f.